We begin with the raw amino-acid sequence, 343 residues long: GTP 3',8-cyclase (343 aa).

One can recognise a Radical SAM core domain in the interval 19-244 (PFGRNISYLR…TDLDDSTGGP (226 aa)). Residue Arg28 coordinates GTP. Cys35 and Cys39 together coordinate [4Fe-4S] cluster. Tyr41 lines the S-adenosyl-L-methionine pocket. [4Fe-4S] cluster is bound at residue Cys42. Arg77 provides a ligand contact to GTP. Gly81 contacts S-adenosyl-L-methionine. Thr111 contacts GTP. Ser135 is a binding site for S-adenosyl-L-methionine. Lys171 serves as a coordination point for GTP. Met205 is an S-adenosyl-L-methionine binding site. [4Fe-4S] cluster contacts are provided by Cys268 and Cys271. 273-275 (RVR) is a binding site for GTP. A [4Fe-4S] cluster-binding site is contributed by Cys285.

Belongs to the radical SAM superfamily. MoaA family. In terms of assembly, monomer and homodimer. [4Fe-4S] cluster is required as a cofactor.

The catalysed reaction is GTP + AH2 + S-adenosyl-L-methionine = (8S)-3',8-cyclo-7,8-dihydroguanosine 5'-triphosphate + 5'-deoxyadenosine + L-methionine + A + H(+). The protein operates within cofactor biosynthesis; molybdopterin biosynthesis. Catalyzes the cyclization of GTP to (8S)-3',8-cyclo-7,8-dihydroguanosine 5'-triphosphate. In Nitrobacter winogradskyi (strain ATCC 25391 / DSM 10237 / CIP 104748 / NCIMB 11846 / Nb-255), this protein is GTP 3',8-cyclase.